We begin with the raw amino-acid sequence, 149 residues long: Calmodulin-1 (149 aa).

Ala2 carries the N-acetylalanine modification. 4 EF-hand domains span residues 8–43 (EQIAEFKEAFSLFDKDGDGCITTKELGTVMRSLGQN), 44–79 (PTEAELQDMISEADADQNGTIDFPEFLNLMARKMKD), 81–116 (DSEEELKEAFKVFDKDQNGFISAAELRHVMTNLGEK), and 117–149 (LTDEEVDEMIREADIDGDGQVNYEEFVRMMLAK). The Ca(2+) site is built by Asp21, Asp23, Asp25, Cys27, Glu32, Asp57, Asp59, Asn61, Thr63, Glu68, Asp94, Asp96, Asn98, and Glu105. Residue Lys116 is modified to N6,N6,N6-trimethyllysine. Ca(2+) contacts are provided by Asp130, Asp132, Asp134, Gln136, and Glu141.

The protein belongs to the calmodulin family. In terms of tissue distribution, high expression in stolon tips and stems, moderate in roots, and very low in leaves. Localized in the meristematic regions of the shoot and root tips, the tip of the developing tuber and the vascular zones of petiole and tuber. Not detected in mesophyll cells.

Its function is as follows. Calmodulin mediates the control of a large number of enzymes, ion channels and other proteins by Ca(2+). Among the enzymes to be stimulated by the calmodulin-Ca(2+) complex are a number of protein kinases and phosphatases. The protein is Calmodulin-1 (PCM1) of Solanum tuberosum (Potato).